Reading from the N-terminus, the 386-residue chain is 4-hydroxy-3-methylbut-2-en-1-yl diphosphate synthase (flavodoxin) (386 aa).

Residues Cys281, Cys284, Cys316, and Glu323 each coordinate [4Fe-4S] cluster.

The protein belongs to the IspG family. [4Fe-4S] cluster is required as a cofactor.

The enzyme catalyses (2E)-4-hydroxy-3-methylbut-2-enyl diphosphate + oxidized [flavodoxin] + H2O + 2 H(+) = 2-C-methyl-D-erythritol 2,4-cyclic diphosphate + reduced [flavodoxin]. The protein operates within isoprenoid biosynthesis; isopentenyl diphosphate biosynthesis via DXP pathway; isopentenyl diphosphate from 1-deoxy-D-xylulose 5-phosphate: step 5/6. In terms of biological role, converts 2C-methyl-D-erythritol 2,4-cyclodiphosphate (ME-2,4cPP) into 1-hydroxy-2-methyl-2-(E)-butenyl 4-diphosphate. This is 4-hydroxy-3-methylbut-2-en-1-yl diphosphate synthase (flavodoxin) from Corynebacterium jeikeium (strain K411).